The following is a 234-amino-acid chain: MFSFKQFSVQQDKTAMKVGTDGVLLGAWTPINHNPISILDIGAGTGLIALMLAQRTSAVQIDALEIDEEAYEQATDNFENSPWSDRLFCYHAGLDEFVEEPEDEYDLIVCNPPFYAENYKTNSEQRDLARFSDAMPFEELIEAADLLLSENGILSVIIPYKEEEKFVTLANEFELYPIKITRVKGTPTSETKRSLLVFSRNKQNCEQDILVIETDRHVYTKEYIALTKGFYLKM.

Belongs to the methyltransferase superfamily. tRNA (adenine-N(6)-)-methyltransferase family.

It localises to the cytoplasm. The catalysed reaction is adenosine(37) in tRNA1(Val) + S-adenosyl-L-methionine = N(6)-methyladenosine(37) in tRNA1(Val) + S-adenosyl-L-homocysteine + H(+). Functionally, specifically methylates the adenine in position 37 of tRNA(1)(Val) (anticodon cmo5UAC). The polypeptide is tRNA1(Val) (adenine(37)-N6)-methyltransferase (Flavobacterium psychrophilum (strain ATCC 49511 / DSM 21280 / CIP 103535 / JIP02/86)).